We begin with the raw amino-acid sequence, 87 residues long: Large ribosomal subunit protein bL31B (87 aa).

It belongs to the bacterial ribosomal protein bL31 family. Type B subfamily. Part of the 50S ribosomal subunit.

The sequence is that of Large ribosomal subunit protein bL31B from Pseudomonas paraeruginosa (strain DSM 24068 / PA7) (Pseudomonas aeruginosa (strain PA7)).